The following is a 282-amino-acid chain: Hydrogenase expression/formation protein HoxQ (282 aa).

This sequence belongs to the HupH/HyaF family.

The sequence is that of Hydrogenase expression/formation protein HoxQ (hoxQ) from Cupriavidus necator (strain ATCC 17699 / DSM 428 / KCTC 22496 / NCIMB 10442 / H16 / Stanier 337) (Ralstonia eutropha).